The following is a 72-amino-acid chain: Translation initiation factor IF-1 (72 aa).

The 72-residue stretch at Met1–Lys72 folds into the S1-like domain.

It belongs to the IF-1 family. Component of the 30S ribosomal translation pre-initiation complex which assembles on the 30S ribosome in the order IF-2 and IF-3, IF-1 and N-formylmethionyl-tRNA(fMet); mRNA recruitment can occur at any time during PIC assembly.

It localises to the cytoplasm. Its function is as follows. One of the essential components for the initiation of protein synthesis. Stabilizes the binding of IF-2 and IF-3 on the 30S subunit to which N-formylmethionyl-tRNA(fMet) subsequently binds. Helps modulate mRNA selection, yielding the 30S pre-initiation complex (PIC). Upon addition of the 50S ribosomal subunit IF-1, IF-2 and IF-3 are released leaving the mature 70S translation initiation complex. This chain is Translation initiation factor IF-1, found in Nitratiruptor sp. (strain SB155-2).